A 481-amino-acid polypeptide reads, in one-letter code: Adenosylhomocysteinase (481 aa).

Residues threonine 65, aspartate 140, and glutamate 200 each contribute to the substrate site. NAD(+) is bound at residue 201–203; sequence TTT. Positions 230 and 234 each coordinate substrate. Residues asparagine 235, 264 to 269, glutamate 287, asparagine 322, 343 to 345, and asparagine 393 each bind NAD(+); these read GYGDVG and IGH.

Belongs to the adenosylhomocysteinase family. NAD(+) is required as a cofactor.

The protein localises to the cytoplasm. It catalyses the reaction S-adenosyl-L-homocysteine + H2O = L-homocysteine + adenosine. It participates in amino-acid biosynthesis; L-homocysteine biosynthesis; L-homocysteine from S-adenosyl-L-homocysteine: step 1/1. Functionally, may play a key role in the regulation of the intracellular concentration of adenosylhomocysteine. The protein is Adenosylhomocysteinase of Polynucleobacter asymbioticus (strain DSM 18221 / CIP 109841 / QLW-P1DMWA-1) (Polynucleobacter necessarius subsp. asymbioticus).